Here is a 232-residue protein sequence, read N- to C-terminus: Ion-translocating oxidoreductase complex subunit E (232 aa).

The next 6 membrane-spanning stretches (helical) occupy residues G18 to A38, L39 to V59, I69 to A89, G93 to G113, A128 to V148, and S182 to G202.

The protein belongs to the NqrDE/RnfAE family. As to quaternary structure, the complex is composed of six subunits: RnfA, RnfB, RnfC, RnfD, RnfE and RnfG.

It localises to the cell inner membrane. Part of a membrane-bound complex that couples electron transfer with translocation of ions across the membrane. The sequence is that of Ion-translocating oxidoreductase complex subunit E from Shewanella amazonensis (strain ATCC BAA-1098 / SB2B).